The following is a 208-amino-acid chain: Small ribosomal subunit protein eS8 (208 aa).

The tract at residues 1–34 is disordered; it reads MGISRDHWHKRRATGGKRAPIRKKRKYELGRPAA. Basic residues predominate over residues 7-26; that stretch reads HWHKRRATGGKRAPIRKKRK.

The protein belongs to the eukaryotic ribosomal protein eS8 family. In terms of assembly, component of the small ribosomal subunit. Identified in a IGF2BP1-dependent mRNP granule complex containing untranslated mRNAs. Part of the small subunit (SSU) processome, composed of more than 70 proteins and the RNA chaperone small nucleolar RNA (snoRNA) U3.

The protein localises to the cytoplasm. The protein resides in the membrane. Its subcellular location is the nucleus. It localises to the nucleolus. Its function is as follows. Component of the small ribosomal subunit. The ribosome is a large ribonucleoprotein complex responsible for the synthesis of proteins in the cell. Part of the small subunit (SSU) processome, first precursor of the small eukaryotic ribosomal subunit. During the assembly of the SSU processome in the nucleolus, many ribosome biogenesis factors, an RNA chaperone and ribosomal proteins associate with the nascent pre-rRNA and work in concert to generate RNA folding, modifications, rearrangements and cleavage as well as targeted degradation of pre-ribosomal RNA by the RNA exosome. The sequence is that of Small ribosomal subunit protein eS8 (RpS8) from Spodoptera frugiperda (Fall armyworm).